The primary structure comprises 471 residues: Collagenase 3 (471 aa).

Positions 1-19 (MHPGVLAAFLFLSWTHCRA) are cleaved as a signal peptide. A propeptide spans 20–103 (LPLPSGGDED…PRCGVPDVGE (84 aa)) (activation peptide). The Cysteine switch motif lies at 94–101 (PRCGVPDV). Cysteine 96 is a Zn(2+) binding site. A glycan (N-linked (GlcNAc...) asparagine) is linked at asparagine 117. Aspartate 128 is a Ca(2+) binding site. A glycan (N-linked (GlcNAc...) asparagine) is linked at asparagine 152. Position 162 (aspartate 162) interacts with Ca(2+). Positions 172 and 174 each coordinate Zn(2+). Residues 176 to 246 (YPFDGPSGLL…GALMFPIYTY (71 aa)) are interaction with TIMP2. Residues aspartate 179, glycine 180, serine 182, and leucine 184 each contribute to the Ca(2+) site. Histidine 187 serves as a coordination point for Zn(2+). Positions 194, 196, and 198 each coordinate Ca(2+). Histidine 200 contributes to the Zn(2+) binding site. 3 residues coordinate Ca(2+): aspartate 202, aspartate 203, and glutamate 205. Position 222 (histidine 222) interacts with Zn(2+). Glutamate 223 is a catalytic residue. Zn(2+)-binding residues include histidine 226, histidine 232, and methionine 240. The tract at residues 263-284 (QSLYGPGDEDPNPKHPKTPDKC) is disordered. The tract at residues 268-471 (PGDEDPNPKH…VMPANSILWC (204 aa)) is interaction with collagen. Over residues 273 to 284 (PNPKHPKTPDKC) the composition is skewed to basic and acidic residues. 4 Hemopexin repeats span residues 281–330 (PDKC…WPEL), 331–377 (PNRI…GLPK), 379–427 (VKKI…FPGI), and 428–471 (GDKV…ILWC). Cysteine 284 and cysteine 471 form a disulfide bridge. 4 residues coordinate Ca(2+): aspartate 291, isoleucine 293, aspartate 335, and alanine 337. At tyrosine 366 the chain carries Phosphotyrosine; by PKDCC. Ca(2+) is bound by residues serine 383, alanine 385, aspartate 432, and valine 434.

Belongs to the peptidase M10A family. As to quaternary structure, monomer. Interacts with TIMP1, TIMP2 and TIMP3. Binds (via the C-terminal region) to collagen. Requires Ca(2+) as cofactor. Zn(2+) is required as a cofactor. The proenzyme is activated by removal of the propeptide; this cleavage can be effected by other matrix metalloproteinases, such as MMP2, MMP3 and MMP14 and may involve several cleavage steps. Cleavage can also be autocatalytic, after partial maturation by another protease or after treatment with 4-aminophenylmercuric acetate (APMA) (in vitro). In terms of processing, N-glycosylated. Post-translationally, tyrosine phosphorylated by PKDCC/VLK. Detected in fetal cartilage and calvaria, in chondrocytes of hypertrophic cartilage in vertebrae and in the dorsal end of ribs undergoing ossification, as well as in osteoblasts and periosteal cells below the inner periosteal region of ossified ribs. Detected in chondrocytes from in joint cartilage that have been treated with TNF and IL1B, but not in untreated chondrocytes. Detected in T lymphocytes. Detected in breast carcinoma tissue.

It is found in the secreted. Its subcellular location is the extracellular space. The protein resides in the extracellular matrix. Inhibited by TIMP1, TIMP2 and TIMP3. Inhibited by acetohydroxamic acid and other zinc chelators. Its function is as follows. Plays a role in the degradation of extracellular matrix proteins including fibrillar collagen, fibronectin, TNC and ACAN. Cleaves triple helical collagens, including type I, type II and type III collagen, but has the highest activity with soluble type II collagen. Can also degrade collagen type IV, type XIV and type X. May also function by activating or degrading key regulatory proteins, such as TGFB1 and CCN2. Plays a role in wound healing, tissue remodeling, cartilage degradation, bone development, bone mineralization and ossification. Required for normal embryonic bone development and ossification. Plays a role in the healing of bone fractures via endochondral ossification. Plays a role in wound healing, probably by a mechanism that involves proteolytic activation of TGFB1 and degradation of CCN2. Plays a role in keratinocyte migration during wound healing. May play a role in cell migration and in tumor cell invasion. The protein is Collagenase 3 (MMP13) of Homo sapiens (Human).